Consider the following 1010-residue polypeptide: Peroxisome proliferator-activated receptor gamma coactivator 1-beta (1010 aa).

Residues 1-91 (MAGNDCGALL…FFQIDSENEA (91 aa)) form an abolishes DNA transcriptional activity when missing region. Residues 115 to 134 (GLDEGDTPSCTPASPAPLSV) form a disordered region. The LXXLL motif 1 signature appears at 140-144 (LERLL). Residues Ser145 and Ser148 each carry the phosphoserine modification. Residues 156-160 (LQKLL) carry the LXXLL motif 2 motif. 3 disordered regions span residues 165-214 (SPTA…RPCT), 227-282 (PRGK…QVPK), and 306-329 (PQRASEPIPQSCSSPLRKVPPRSR). 2 stretches are compositionally biased toward polar residues: residues 178–189 (TWSQTSLSSRSQ) and 264–279 (PQDSLGQDTANPNSAQ). The LXXLL motif 3 signature appears at 342–346 (LRELL). The segment covering 369-384 (TPQSRTRPPKDSQASP) has biased composition (polar residues). 3 disordered regions span residues 369–475 (TPQS…VCPV), 517–567 (GLTD…CLML), and 590–674 (GTAG…QKRP). Phosphoserine is present on Ser383. The span at 411-428 (LRLEVKRDVNKPARQKRE) shows a compositional bias: basic and acidic residues. A compositionally biased stretch (acidic residues) spans 429–449 (EDEEEEEEEEEEEEKEDEEEE). A compositionally biased stretch (low complexity) spans 521-532 (SSQGQQLPLGSQ). Positions 604–618 (PMEEDPFKQDTKHSP) are enriched in basic and acidic residues. Composition is skewed to polar residues over residues 619-638 (GQDTAPSLPSPETLQLTATP) and 659-670 (QHATTQPVSQAG). Ser628 carries the phosphoserine modification. The short motif at 681–684 (DHDY) is the HCFC1-binding-motif (HBM) element. Disordered stretches follow at residues 714–744 (HQGATLPVETKTPRREADQNCDPTPKDSMQL) and 778–881 (DTVF…KKRR). A compositionally biased stretch (low complexity) spans 782–794 (EDSSSSSGESSFL). Acidic residues predominate over residues 795-811 (LEEEEEEGGEEDDEGED). The segment covering 832 to 852 (SRQLCSRSRSSSGSSSCSSWS) has biased composition (low complexity). One can recognise an RRM domain in the interval 889-963 (RVVYIRNLSG…RNEPSFHLSY (75 aa)).

Interacts with estrogen receptor alpha/ESR1. Interacts with Sterol regulatory binding transcription factor 1/SREBF1, PPAR-alpha/PPARA, thyroid hormone receptor beta/THRB and host cell factor/HCFC1. Interacts with Estrogen-related receptor gamma/ESRRG and alpha/ESRRA. Interacts with PRDM16. Ubiquitous with higher expression in heart, brown adipose tissue.

Its subcellular location is the nucleus. Functionally, plays a role of stimulator of transcription factors and nuclear receptors activities. Activates transcriptional activity of estrogen receptor alpha, nuclear respiratory factor 1 (NRF1) and glucocorticoid receptor in the presence of glucocorticoids. May play a role in constitutive non-adrenergic-mediated mitochondrial biogenesis as suggested by increased basal oxygen consumption and mitochondrial number when overexpressed. May be part of the pathways regulating the elevation of gluconeogenesis, beta-oxidation of fatty acids and ketogenesis during fasting. Stimulates SREBP-mediated lipogenic gene expression in the liver. Induces energy expenditure and antagonizes obesity when overexpressed. Also induces the expression of mitochondrial genes involved in oxidative metabolism. Induces the expression of PERM1 in the skeletal muscle in an ESRRA-dependent manner. The chain is Peroxisome proliferator-activated receptor gamma coactivator 1-beta (Ppargc1b) from Rattus norvegicus (Rat).